The primary structure comprises 466 residues: Glucose-6-phosphate 1-dehydrogenase 1 (466 aa).

Residues serine 48, 88 to 89, and lysine 141 contribute to the NADP(+) site; that span reads DV. Substrate contacts are provided by histidine 171, lysine 175, glutamate 209, and aspartate 228. The active-site Proton acceptor is histidine 233. Lysine 319 and lysine 324 together coordinate substrate.

The protein belongs to the glucose-6-phosphate dehydrogenase family.

The catalysed reaction is D-glucose 6-phosphate + NADP(+) = 6-phospho-D-glucono-1,5-lactone + NADPH + H(+). Its pathway is carbohydrate degradation; pentose phosphate pathway; D-ribulose 5-phosphate from D-glucose 6-phosphate (oxidative stage): step 1/3. In terms of biological role, catalyzes the oxidation of glucose 6-phosphate to 6-phosphogluconolactone. This Mycobacterium tuberculosis (strain CDC 1551 / Oshkosh) protein is Glucose-6-phosphate 1-dehydrogenase 1.